Reading from the N-terminus, the 474-residue chain is Protein CyaE (474 aa).

Residues 1 to 31 (MAAVQVRRRGRALALALWAGFALSVGGGVRA) form the signal peptide.

Belongs to the outer membrane factor (OMF) (TC 1.B.17) family.

Its subcellular location is the cell outer membrane. In terms of biological role, cyaE is necessary for transport of calmodulin-sensitive adenylate cyclase-hemolysin (cyclolysin). The polypeptide is Protein CyaE (cyaE) (Bordetella pertussis (strain Tohama I / ATCC BAA-589 / NCTC 13251)).